The following is a 634-amino-acid chain: Putative ABC transporter ATP-binding protein MG015 homolog (634 aa).

6 helical membrane passes run 54–74 (VLYV…NSIL), 111–131 (LTIV…FNVA), 189–209 (VGGQ…ILFV), 213–233 (VIAL…FLFL), 296–316 (VFIY…SISI), and 325–345 (IPSF…IAAL). Residues 54 to 364 (VLYVMVCAIF…IFSLWNLIQL (311 aa)) form the ABC transmembrane type-1 domain. Residues 397-631 (IRFEKVVFGY…NGFYARLKRS (235 aa)) enclose the ABC transporter domain. 430–437 (GPTGAGKS) is a binding site for ATP.

It belongs to the ABC transporter superfamily.

It localises to the cell membrane. The chain is Putative ABC transporter ATP-binding protein MG015 homolog from Mycoplasma pneumoniae (strain ATCC 29342 / M129 / Subtype 1) (Mycoplasmoides pneumoniae).